The chain runs to 690 residues: MRNLNLILFTALAAVTYANVQPHDISQNGAVKDGNHLRIDLNETSSVELMDKWLSQAFSGLMAAVASKKIAKMPAEHQNIVQQCSKDAKDVREHAKCLVKLLDAEKSGKLGRKQYQKVVKSPETIVLPENPKMLTKKDLEKAENAGAAENNENLEWIGSFGTARAKRSYKVVHRDSYALRSTDDVDGMTKLAKSLTNTVRAMKNKTERAEPWVEAVGRIKKLGEEAKREKKNREVMKKRLKQMIDNTPAEFVDPRKPVALKQAEMEDENNEIAKLMRKKEADEIRVPLKFLRKAVKTALMLGGQNVTDFDQKTLKMVSPRMMSIVPEQEDESLFNLLSPSLFSLHDEGEGIEKLTSLPHLLKKLDNHGQNAWMDFIVEAAGVSDEVTKTEKVFREKKEKELRGTDGVPLYFTKENATKILGNEEKSKIEVFEDLDKSYSEEQKKKLNDDGFAFLTEKQMERLYGKESPYKHTKALKKFKRLRDDPEKYIEKDIRALAEAEKFRVARRADIVSSPFILTPLTFASAPLSNTFIVLSPLVLSPITLSPAVLGPIILSPWVFVPLILSPRVLSPLIVNPLVFSPIILSPLVLHPLILVPGVFNPIILSPLVLSPLILSPQVFTPLILSPFALNPLILTPMVGSPLILSPFVLSPIILSPQALFAVVLSPYALSPLVESKLIAAEVVLSPSWLS.

The signal sequence occupies residues 1-18 (MRNLNLILFTALAAVTYA). N-linked (GlcNAc...) asparagine glycosylation is found at Asn42 and Asn204. A coiled-coil region spans residues 219-285 (IKKLGEEAKR…MRKKEADEIR (67 aa)). Asn305 and Asn415 each carry an N-linked (GlcNAc...) asparagine glycan. The next 5 membrane-spanning stretches (helical) occupy residues 514 to 534 (PFIL…FIVL), 544 to 564 (LSPA…PLIL), 579 to 599 (FSPI…PGVF), 618 to 638 (VFTP…TPMV), and 643 to 663 (ILSP…FAVV).

The protein belongs to the mlt-10-like family. As to expression, expressed in the major body hypodermal syncytium (Hyp7), the dorsal and ventral ridges of the hypodermis, hypodermal cells in the head and tail, and the pharyngeal myoepithelium, but not the lateral seam cells.

Its subcellular location is the membrane. The protein localises to the secreted. Its function is as follows. Required for the efficient removal of larval cuticles during the molting cycle as well as the synthesis of new cuticles. This chain is Molting protein mlt-10, found in Caenorhabditis elegans.